The chain runs to 351 residues: Dihydroorotate dehydrogenase (quinone) (351 aa).

FMN-binding positions include 67–71 (AGFDK) and Thr-91. Lys-71 serves as a coordination point for substrate. Position 116–120 (116–120 (NAMGF)) interacts with substrate. The FMN site is built by Asn-145 and Asn-178. Residue Asn-178 coordinates substrate. The active-site Nucleophile is Ser-181. A substrate-binding site is contributed by Asn-183. 2 residues coordinate FMN: Lys-214 and Thr-242. 243 to 244 (NT) contributes to the substrate binding site. FMN-binding positions include Gly-262, Gly-291, and 312-313 (YS).

It belongs to the dihydroorotate dehydrogenase family. Type 2 subfamily. Monomer. FMN serves as cofactor.

It localises to the cell membrane. It catalyses the reaction (S)-dihydroorotate + a quinone = orotate + a quinol. The protein operates within pyrimidine metabolism; UMP biosynthesis via de novo pathway; orotate from (S)-dihydroorotate (quinone route): step 1/1. In terms of biological role, catalyzes the conversion of dihydroorotate to orotate with quinone as electron acceptor. This chain is Dihydroorotate dehydrogenase (quinone), found in Helicobacter pylori (strain G27).